The sequence spans 920 residues: Anillin-related medial ring protein mid1 (920 aa).

The interval 1 to 452 (MKEQEFSYRE…LSSEDLRHPS (452 aa)) is disordered. Phosphoserine occurs at positions 15 and 24. The residue at position 34 (T34) is a Phosphothreonine. Residues S46 and S62 each carry the phosphoserine modification. Residues 69–81 (LNVATDLLESLDL) carry the Nuclear export sequence (NES) 1 motif. S95 carries the post-translational modification Phosphoserine. Polar residues predominate over residues 461–481 (RTYSNYCENEPNKSSQSLVSS). Phosphoserine is present on S531. The tract at residues 538 to 561 (DLPSQDKSTSYEVPNGTENQSPRP) is disordered. A compositionally biased stretch (polar residues) spans 542 to 561 (QDKSTSYEVPNGTENQSPRP). The interval 551-920 (PNGTENQSPR…WLQEYVNFMA (370 aa)) is cryptic lipid-binding C2 domain. The Nuclear localization sequence (NLS) motif lies at 681 to 710 (RKFFDKLFNRRKKRKLNKAAAVENSKAKKS). The short motif at 763–773 (LGNLTLTCLYI) is the Nuclear export sequence (NES) 2 element. Residues 802–901 (LYNEGYLYRL…WLQVMNSRSF (100 aa)) enclose the PH domain.

Homodimer. Interacts with blt1 and cdr2. Interacts with gef2. Interacts with plo1 and rng2. Interacts with fhk2 and sep1. Interacts with clp1. Post-translationally, phosphorylated. At the onset of mitosis, becomes hyperphosphorylated, leaves the nucleus, and forms a medial ring. Phosphorylation by plo1 and other kinases may contribute to solubilizing mid1 for export from the nucleus. Phosphorylation by sid2 drives removal from the cortex at the actomyosin contractile ring constriction onset.

Its subcellular location is the nucleus. The protein localises to the cytoplasm. It is found in the cell cortex. It localises to the cytoskeleton. Its function is as follows. Scaffold protein that anchors the contractile ring (CR) at the cell equator during cytokinesis. At the onset of mitosis, membrane-bound oligomers of mid1 assemble recruitment platforms for cytokinetic ring components at the medial cortex and stabilize the ring position during its compaction. Recruits dephosphorylated myo2, but also rng2, clp1 and cdc15 to nodes and to place cytokinetic nodes around the cell equator the medial cortex to promote the ring assembly in cooperation with F-actin. Necessary to stabilize the mitotic spindle perpendicular to the axis of cell division. Also recruits the cdr2 kinase to the CR. In the nucleus, binds to the promoter regions of M-G1 transcribed genes to negatively regulate their expression. The chain is Anillin-related medial ring protein mid1 from Schizosaccharomyces pombe (strain 972 / ATCC 24843) (Fission yeast).